Reading from the N-terminus, the 950-residue chain is Protocadherin alpha-1 (950 aa).

Positions 1 to 29 are cleaved as a signal peptide; the sequence is MVFSRRGGLGARDLLLWLLLLAAWEVGSG. 6 Cadherin domains span residues 30–133, 157–242, 243–350, 351–455, 456–565, and 588–678; these read QLHY…PPVF, AADA…APLF, DQAV…APEL, AVTS…APAF, AQPE…APAL, and GHVV…APKA. The Extracellular segment spans residues 30-697; the sequence is QLHYSIPEEA…GPEAALVDVN (668 aa). Residues Asn257 and Asn265 are each glycosylated (N-linked (GlcNAc...) asparagine). Residue Asn548 is glycosylated (N-linked (GlcNAc...) asparagine). Residues 698-718 traverse the membrane as a helical segment; it reads VYLIIAICAVSSLLVLTLLLY. The Cytoplasmic segment spans residues 719–950; it reads TALRCSVPPT…GNSTTDNSDQ (232 aa). PXXP repeat units lie at residues 734–737, 799–802, 832–835, 873–876, and 891–894; these read PGKP, PRQP, PGGP, PGNP, and PGSP. Residues 734–894 form a 5 X 4 AA repeats of P-X-X-P region; that stretch reads PGKPTLVCSS…PDKFIIPGSP (161 aa). Disordered regions lie at residues 752-808, 828-856, and 871-890; these read QQRR…DWRY, LRAG…EVSP, and YGPG…KFII. Residues 900-950 form a disordered region; the sequence is RQEPTNSQIDKSDFITFGKKEETKKKKKKKKGNKTQEKKEKGNSTTDNSDQ. Residues 909-923 are compositionally biased toward basic and acidic residues; that stretch reads DKSDFITFGKKEETK.

The protein localises to the cell membrane. It localises to the secreted. Functionally, potential calcium-dependent cell-adhesion protein. May be involved in the establishment and maintenance of specific neuronal connections in the brain. The polypeptide is Protocadherin alpha-1 (PCDHA1) (Homo sapiens (Human)).